Reading from the N-terminus, the 453-residue chain is Serine/threonine-protein phosphatase 2A regulatory subunit B'' subunit gamma (453 aa).

2 consecutive EF-hand domains span residues Pro273 to Asn308 and Lys341 to Leu376. Ca(2+)-binding residues include Asp286, Asp288, Asn290, Met292, and Glu297.

In terms of assembly, interacts with MCM3AP/GANP, PPP5C, and the phosphatase 2A core enzyme composed of the PPP2CA catalytic subunit and the constant regulatory subunit PPP2R1A. Finds in a complex with ABCB1, TFPI2 and PPP2R3C; leading to the dephosphorylation of ABCB1.

The protein resides in the nucleus. It localises to the cytoplasm. Its function is as follows. May regulate MCM3AP phosphorylation through phosphatase recruitment. May act as a negative regulator of ABCB1 expression and function through the dephosphorylation of ABCB1 by TFPI2/PPP2R3C complex. May play a role in the activation-induced cell death of B-cells. The polypeptide is Serine/threonine-protein phosphatase 2A regulatory subunit B'' subunit gamma (PPP2R3C) (Bos taurus (Bovine)).